The chain runs to 299 residues: Probable lipid kinase YegS (299 aa).

The region spanning 2 to 133 (ANFPASLLIL…IDMARVNDKT (132 aa)) is the DAGKc domain. ATP is bound by residues T40, 66–72 (GDGTINE), and T95. Residues L215, D218, and L220 each coordinate Mg(2+). Catalysis depends on E271, which acts as the Proton acceptor.

The protein belongs to the diacylglycerol/lipid kinase family. YegS lipid kinase subfamily. Mg(2+) serves as cofactor. It depends on Ca(2+) as a cofactor.

Its subcellular location is the cytoplasm. Probably phosphorylates lipids; the in vivo substrate is unknown. The sequence is that of Probable lipid kinase YegS from Salmonella newport (strain SL254).